A 928-amino-acid chain; its full sequence is BCAS3 microtubule associated cell migration factor (928 aa).

N-acetylmethionine is present on Met-1. Lys-215 participates in a covalent cross-link: Glycyl lysine isopeptide (Lys-Gly) (interchain with G-Cter in SUMO1); alternate. Lys-215 is covalently cross-linked (Glycyl lysine isopeptide (Lys-Gly) (interchain with G-Cter in SUMO2); alternate). Required for recruitment to preautophagosomal structure in response to mitophagy stretches follow at residues 254 to 312 and 437 to 560; these read RGGA…SRRS and YGGQ…IKAP. Phosphoserine occurs at positions 461, 480, and 488. Disordered stretches follow at residues 472–518 and 795–816; these read TSKQ…PRLS and VRSDPVSMPGSSRAVSDRRGVS. 2 stretches are compositionally biased toward low complexity: residues 480–494 and 505–514; these read SPVPGLSSSPSGSPL and NNFTNNNPGN. Phosphoserine is present on residues Ser-838, Ser-886, and Ser-898. Residues 868–928 are disordered; it reads ESPSRDVVGS…PLSLFPTGFP (61 aa). Residues 887-901 show a composition bias toward low complexity; sequence IETLSNSSGSTSGSI.

Belongs to the BCAS3 family. Interacts with histone H3, ESR1, KAT2B and PELP1; the interactions occur in a estrogen-dependent manner. Interacts with beta-tubulin and VIM. Interacts (via C-terminal) with PHAF1; the interaction is requrired for the association with the phagophore. As to expression, expressed in blood islands and yolk sac blood islands (at protein level). Highly expressed in mammary tumors. Expressed in eostrogen-induced epithelial cells of mammary glands. Expressed in brain, heart, kidney, lung, liver and spleen. Expressed in embryonic stem cells, embryoid bodies, endothelial cells and fibroblasts.

The protein resides in the nucleus. It localises to the cytoplasm. The protein localises to the cytoskeleton. Its subcellular location is the preautophagosomal structure. Its function is as follows. Functions synergistically with PELP1 as a transcriptional coactivator of estrogen receptor-responsive genes. Stimulates histone acetyltransferase activity. Binds to chromatin. Plays a role in angiogenesis. Participates in the regulation of cell polarity and directional endothelial cell migration by mediating both the activation and recruitment of CDC42 and the reorganization of the actin cytoskeleton at the cell leading edge. Promotes filipodia formation. Plays a regulatory role in autophagic activity. In complex with PHAF1, associates with the preautophagosomal structure during both non-selective and selective autophagy. Probably binds phosphatidylinositol 3-phosphate (PtdIns3P) which would mediate the recruitment preautophagosomal structures. The sequence is that of BCAS3 microtubule associated cell migration factor from Mus musculus (Mouse).